We begin with the raw amino-acid sequence, 279 residues long: Syntaxin-21 (279 aa).

The tract at residues 1–34 is disordered; that stretch reads MSFQDLEAGTRSPAPNRFTGGRQQRPSSRGDPSQ. The residue at position 2 (S2) is an N-acetylserine. The Cytoplasmic segment spans residues 2 to 258; sequence SFQDLEAGTR…AKTQRSNSSL (257 aa). Over residues 21 to 31 the composition is skewed to polar residues; sequence GRQQRPSSRGD. The stretch at 65 to 94 forms a coiled coil; the sequence is ELRDKLQKTRLQISELVKNTSAKLKEASEA. The region spanning 186-248 is the t-SNARE coiled-coil homology domain; the sequence is EAIIEEREQG…TQATVQLRKA (63 aa). The helical; Anchor for type IV membrane protein transmembrane segment at 259-279 threads the bilayer; it reads TCLLILIFGIVLLIVIIVVLV.

It belongs to the syntaxin family. In terms of assembly, interacts with VTI11 and SYP51 to form a t-SNARE complex and with alpha-SNAP to form a 20S complex. A high level expression is seen in the roots while a low level expression is seen in the leaves.

Its subcellular location is the prevacuolar compartment membrane. Functionally, may function in the docking or fusion of transport vesicles with the prevacuolar membrane. This Arabidopsis thaliana (Mouse-ear cress) protein is Syntaxin-21 (SYP21).